The primary structure comprises 529 residues: UDP-glucuronosyltransferase 2B1 (529 aa).

The N-terminal stretch at 1–23 (MSMKQTSVFLLIQLICYFRPGAC) is a signal peptide. N-linked (GlcNAc...) asparagine glycosylation is found at Asn134 and Asn316. A helical transmembrane segment spans residues 494 to 510 (VIGFLLLCVVGVVFIIT).

This sequence belongs to the UDP-glycosyltransferase family.

It is found in the endoplasmic reticulum membrane. It catalyses the reaction glucuronate acceptor + UDP-alpha-D-glucuronate = acceptor beta-D-glucuronoside + UDP + H(+). It carries out the reaction 17beta-estradiol + UDP-alpha-D-glucuronate = 17beta-estradiol 17-O-(beta-D-glucuronate) + UDP + H(+). Its function is as follows. UDP-glucuronosyltransferase (UGT) that catalyzes phase II biotransformation reactions in which lipophilic substrates are conjugated with glucuronic acid to increase the metabolite's water solubility, thereby facilitating excretion into either the urine or bile. Essential for the elimination and detoxification of drugs, xenobiotics and endogenous compounds. Catalyzes the glucuronidation of the endogenous estrogen hormone estradiol. The sequence is that of UDP-glucuronosyltransferase 2B1 from Rattus norvegicus (Rat).